A 1485-amino-acid polypeptide reads, in one-letter code: Cystic fibrosis transmembrane conductance regulator (1485 aa).

At 1–78 (MQRSPVEDAN…SLLRAMARCY (78 aa)) the chain is on the cytoplasmic side. Residues 79-99 (IKPFLLFGFLLYIGEATKTVQ) traverse the membrane as a helical segment. The 271-residue stretch at 83–353 (LLFGFLLYIG…CMVLRMTVTR (271 aa)) folds into the ABC transmembrane type-1 1 domain. The Extracellular portion of the chain corresponds to 100-123 (PQLLGRIIASFDPAHEPERANGYF). Residues 124–149 (LAFGLGLLFTARFLLLQPAMFGLHHL) traverse the membrane as a helical segment. The Cytoplasmic segment spans residues 150–195 (GMQIRIALFSIIYKKTLKLSSRVLDKISTGQLVSLMSANLGKFDQS). The helical transmembrane segment at 196-216 (LGMAHFIWISPLQCILCTGLI) threads the bilayer. Residues 217–224 (WELIDVNS) lie on the Extracellular side of the membrane. The helical transmembrane segment at 225 to 245 (FCALAAISLLGVLQAFLSHKM) threads the bilayer. Over 246 to 299 (GPYKAQKVLLTNKRLALTSEIMENLHSVKAYGWEEIMETLIKNIRQDEVKLTRK) the chain is Cytoplasmic. The chain crosses the membrane as a helical span at residues 300 to 320 (IGSLRYFYSSAYFFSAIFVIV). Residues 321-340 (AAVVPHALSRGINLRRIFTT) lie on the Extracellular side of the membrane. The chain crosses the membrane as a helical span at residues 341–363 (LSYCMVLRMTVTRQLPGSIQMWY). Residues 364 to 856 (DTMRLIWKIE…YVRYVSNNKS (493 aa)) lie on the Cytoplasmic side of the membrane. ATP contacts are provided by residues tryptophan 402, 457-464 (GSMGSGKS), and glutamine 492. Positions 424–645 (NGDAGLFFTN…RPDFSSLLLG (222 aa)) constitute an ABC transporter 1 domain. Residues 653 to 826 (SAERRCSILT…GILEEENIEA (174 aa)) are disordered R region. Residues 857–877 (LLYVLIFILFIAAIEIAGSVA) form a helical membrane-spanning segment. In terms of domain architecture, ABC transmembrane type-1 2 spans 860-1163 (VLIFILFIAA…CVATSIAVDG (304 aa)). Over 878 to 924 (GIFLITDELWREEHQRSEPNMTKHSNASSSGQTYAITVTPTSSYYIL) the chain is Extracellular. Residues asparagine 897 and asparagine 903 are each glycosylated (N-linked (GlcNAc...) asparagine). A discontinuously helical transmembrane segment spans residues 925–946 (YIYVATSESLLAMGFFRGLPFV). Residues 947–996 (HTTITISKKLHQKMLHAVLSAPMSVLNTMKTGRIMNRFTKDMATIDDMLP) lie on the Cytoplasmic side of the membrane. Residues 997 to 1019 (LLMFDFVQLTVVVVGCILVVSIV) form a helical membrane-spanning segment. Over 1020–1021 (RP) the chain is Extracellular. The chain crosses the membrane as a helical span at residues 1022–1042 (YIFLAATPLAIIFIVMRKYFL). Topologically, residues 1043–1103 (RTGQQLKQLE…TATWFLYLST (61 aa)) are cytoplasmic. A helical transmembrane segment spans residues 1104-1124 (LRWFLFRADILFVFFFTLAAW). Topologically, residues 1125-1138 (IAVGTNQDKPGEIG) are extracellular. The chain crosses the membrane as a helical span at residues 1139-1159 (IIICLAMLILGTFQWCVATSI). Topologically, residues 1160–1485 (AVDGMMRSVD…AEDNIQDTRL (326 aa)) are cytoplasmic. The region spanning 1211-1444 (IEVRNLTVKY…TSHLKQAISP (234 aa)) is the ABC transporter 2 domain. Residues tyrosine 1220 and 1245-1252 (GRTGSGKS) contribute to the ATP site. A disordered region spans residues 1452-1485 (PRRNSSMRTPQSKLSSVTQTLQEEAEDNIQDTRL). The segment covering 1454 to 1473 (RNSSMRTPQSKLSSVTQTLQ) has biased composition (polar residues). Residues 1474–1485 (EEAEDNIQDTRL) show a composition bias toward acidic residues. A PDZ-binding motif is present at residues 1483–1485 (TRL).

This sequence belongs to the ABC transporter superfamily. ABCC family. CFTR transporter (TC 3.A.1.202) subfamily. Monomer; does not require oligomerization for channel activity. Interacts with cse1l; this interaction may down-regulate cftr activity. Post-translationally, phosphorylated; this activates the channel. Dephosphorylation strongly decreases ATPase activity. Phosphorylation at PKA sites activates the channel. Phosphorylation at PKC sites enhances the response to phosphorylation by PKA. As to expression, detected in gut epithelium (at protein level). Detected in kidney, spleen, intestine and liver. Detected in pancreatic duct epithelium at 5 dpf and throughout adult life.

The protein resides in the apical cell membrane. Its subcellular location is the early endosome membrane. The protein localises to the cell membrane. It localises to the recycling endosome membrane. It is found in the endoplasmic reticulum membrane. It carries out the reaction ATP + H2O + closed Cl(-) channel = ADP + phosphate + open Cl(-) channel.. It catalyses the reaction chloride(in) = chloride(out). The enzyme catalyses hydrogencarbonate(in) = hydrogencarbonate(out). The catalysed reaction is ATP + H2O = ADP + phosphate + H(+). In terms of biological role, epithelial ion channel that plays an important role in the regulation of epithelial ion and water transport and fluid homeostasis. Mediates the transport of chloride ions across the cell membrane. Possesses an intrinsic ATPase activity and utilizes ATP to gate its channel; the passive flow of anions through the channel is gated by cycles of ATP binding and hydrolysis by the ATP-binding domains. The ion channel is also permeable to HCO(3)(-); selectivity depends on the extracellular chloride concentration. Exerts its function also by modulating the activity of other ion channels and transporters. Contributes to the regulation of the pH and the ion content of the epithelial fluid layer. Required for normal fluid homeostasis in the gut. Required for normal volume expansion and cell shape changes of Kupffer's vesicle during embryonic development and for normal establishment of left-right body patterning. Required for normal resistance to infection by P.aeruginosa strain PA14 and strain SMC573. This is Cystic fibrosis transmembrane conductance regulator from Danio rerio (Zebrafish).